A 447-amino-acid polypeptide reads, in one-letter code: Phosphoglucosamine mutase (447 aa).

Ser-105 serves as the catalytic Phosphoserine intermediate. Mg(2+) contacts are provided by Ser-105, Asp-244, Asp-246, and Asp-248. Ser-105 carries the post-translational modification Phosphoserine.

The protein belongs to the phosphohexose mutase family. Requires Mg(2+) as cofactor. In terms of processing, activated by phosphorylation.

It catalyses the reaction alpha-D-glucosamine 1-phosphate = D-glucosamine 6-phosphate. Its function is as follows. Catalyzes the conversion of glucosamine-6-phosphate to glucosamine-1-phosphate. The sequence is that of Phosphoglucosamine mutase from Polynucleobacter asymbioticus (strain DSM 18221 / CIP 109841 / QLW-P1DMWA-1) (Polynucleobacter necessarius subsp. asymbioticus).